We begin with the raw amino-acid sequence, 2548 residues long: Unconventional myosin-IXa (2548 aa).

Residues 14-112 enclose the Ras-associating domain; it reads NEHTLRIYPG…YRFLLREKNL (99 aa). The Myosin motor domain maps to 146 to 1016; the sequence is KDFDDLCSLP…ERQHLQDLLH (871 aa). Residues 175 to 195 traverse the membrane as a helical segment; that stretch reads IYTYVGSILIVINPFKFLPIY. 239 to 246 lines the ATP pocket; it reads GESGSGKT. Ser755 carries the post-translational modification Phosphoserine. The tract at residues 898-920 is actin-binding; sequence LSKLMETLGQAEPYFVKCIRSNA. 5 consecutive IQ domains span residues 1021-1041, 1042-1071, 1074-1103, 1115-1144, and 1138-1167; these read RRII…HFLH, LRQA…QKDA, MASA…AAIV, RHMA…KIIL, and QRKK…QRLR. The neck or regulatory domain stretch occupies residues 1021-1162; it reads RRIILLQRWF…RARQRFKALK (142 aa). A tail region spans residues 1163–2511; sequence EQRLRETKPE…LKNVKNSPQK (1349 aa). Residues 1223 to 1236 show a composition bias toward basic and acidic residues; that stretch reads SVDCLKESPNKQQE. Residues 1223–1250 form a disordered region; that stretch reads SVDCLKESPNKQQERAQSQSGVDLQEDV. Residues Ser1242 and Ser1258 each carry the phosphoserine modification. A coiled-coil region spans residues 1264-1291; that stretch reads QKKVGRAKRESRRMRELEQAIFSLELLK. Residues Ser1299 and Ser1317 each carry the phosphoserine modification. A disordered region spans residues 1299 to 1386; the sequence is SPSEDRRWST…SNETSSAEHL (88 aa). Composition is skewed to low complexity over residues 1324 to 1337 and 1356 to 1366; these read SESS…LSYE and FPSPKISSSPK. Phosphoserine is present on Ser1364. Polar residues predominate over residues 1372-1381; that stretch reads NALSASNETS. The stretch at 1486-1532 forms a coiled coil; that stretch reads VLKKLEKLNTEKEERQKQLQQQNEKEMMEQIRQQTDILEKERKAFKT. The segment at 1804-1836 is disordered; sequence YHPTPPLSPELPGSCRKEFKENKEPSPKAKRKR. Residues 1818 to 1830 are compositionally biased toward basic and acidic residues; sequence CRKEFKENKEPSP. Ser1948 bears the Phosphoserine mark. Phorbol-ester/DAG-type zinc fingers lie at residues 1999-2048 and 2068-2119; these read GHIF…TAKC and LTSE…DAES. Positions 2063–2251 constitute a Rho-GAP domain; it reads VELSRLTSED…LIVVEQMNKY (189 aa). The residue at position 2294 (Ser2294) is a Phosphoserine. Residues 2315–2358 are a coiled coil; the sequence is AAMETDITEQQQAAMQQEERVLTEQIENLQKEKEELTFEMLVLE. 2 disordered regions span residues 2359–2383 and 2401–2424; these read PRAS…ENLN and SSLK…KQQD. Position 2464 is a phosphoserine (Ser2464). Positions 2490–2531 are disordered; the sequence is RGTFNPEKGKQKLKNVKNSPQKTKETPEGTVMSGRRKTVDPD.

The protein belongs to the TRAFAC class myosin-kinesin ATPase superfamily. Myosin family. In terms of processing, phosphorylated by ALPK1 following monosodium urate monohydrate (MSU)-induced inflammation. In terms of tissue distribution, found to be expressed in testis and placenta and at lower levels in all the examined tissues with the exception of liver. Isoform 5: Found in leukocytes but not in brain, retina or testis.

The protein localises to the membrane. It is found in the cytoplasm. The protein resides in the synapse. Its subcellular location is the cell projection. It localises to the growth cone. Myosins are actin-based motor molecules with ATPase activity. Unconventional myosins serve in intracellular movements. Regulates Rho by stimulating it's GTPase activity in neurons. Required for the regulation of neurite branching and motor neuron axon guidance. This chain is Unconventional myosin-IXa (MYO9A), found in Homo sapiens (Human).